Reading from the N-terminus, the 506-residue chain is (+)-vincadifformine 19-hydroxylase (506 aa).

The Lumenal segment spans residues 1–4; that stretch reads MELD. The chain crosses the membrane as a helical span at residues 5–25; the sequence is ECSPSIFIISFIFIAISIAIL. The Cytoplasmic segment spans residues 26-506; sequence RRIRPKKTKA…DLHLIPTSYM (481 aa). Cys450 contributes to the heme binding site.

It belongs to the cytochrome P450 family. Heme serves as cofactor. In terms of tissue distribution, accumulates progressively in roots.

The protein resides in the endoplasmic reticulum membrane. It catalyses the reaction (+)-vincadifformine + reduced [NADPH--hemoprotein reductase] + O2 = (+)-minovincinine + oxidized [NADPH--hemoprotein reductase] + H2O + H(+). It participates in alkaloid biosynthesis. With respect to regulation, the enantiomer (-)-vincadifformine acts as a competitive inhibitor. Its function is as follows. Component of the monoterpenoid indole alkaloids (MIAs, e.g. echitovenine, tabersonine, lochnericine, 19-hydroxytabersonine and horhammericine) biosynthetic pathway; MIAs are used in cancer treatment and other medical applications. Cytochrome P450 catalyzing the hydroxylation of (+)-vincadifformine to (+)-minovincinine. This Catharanthus roseus (Madagascar periwinkle) protein is (+)-vincadifformine 19-hydroxylase.